The primary structure comprises 2227 residues: Genome polyprotein (2227 aa).

2 short sequence motifs ((L)YPX(n)L motif) span residues 167–171 (YPHGL) and 200–205 (YPVWEL). The interval 766-836 (MMSRIAAGDL…PRKMKGLFSQ (71 aa)) is involved in P1-2A pentamerization. The chain crosses the membrane as a helical span at residues 1011–1031 (TVEIINTVLCFVKSGILLYVI). A membrane-penetrating ability region spans residues 1043-1070 (IGLLRVMNYADIGCSVISCGKVFSKMLE). Residues 1127–1152 (KKKDILNILKDNQQKIEKAIEEADNF) adopt a coiled-coil conformation. The 163-residue stretch at 1204–1366 (HQKLKNLGSI…SFFKNPHNDM (163 aa)) folds into the SF3 helicase domain. 1230–1237 (GKRGGGKS) serves as a coordination point for ATP. The chain crosses the membrane as a helical span at residues 1462-1482 (WVAVGAAVGILGVLVGGWFVY). An O-(5'-phospho-RNA)-tyrosine modification is found at Tyr1499. Residues 1514-1728 (DPVESQSTLE…VAKLVTQEMF (215 aa)) form the Peptidase C3 domain. Residues His1563, Asp1603, and Cys1691 each act as for protease 3C activity in the active site. The 122-residue stretch at 1976–2097 (DVGLDLDFSA…VFSRDVQIDN (122 aa)) folds into the RdRp catalytic domain.

This sequence belongs to the picornaviridae polyprotein family. As to quaternary structure, homodimer. Homomultimer; probably interacts with membranes in a multimeric form. Seems to assemble into amyloid-like fibers. In terms of assembly, homodimer. Monomer. Interacts with protein 3CD. Interacts with host ACBD3. As to quaternary structure, interacts with protein 3AB. In terms of assembly, interacts with human MAVS. Homodimer; disulfide-linked. As to quaternary structure, homopentamer. Homooligomer. In terms of assembly, interacts with capsid protein VP2. Interacts with capsid protein VP3. Interacts with capsid protein VP1. Interacts with capsid protein VP3. As to quaternary structure, interacts with capsid protein VP1. Interacts with capsid protein VP2. In terms of processing, specific enzymatic cleavages by viral protease in vivo yield a variety of precursors and mature proteins. Polyprotein processing intermediates are produced, such as P1-2A which is a functional precursor of the structural proteins, VP0 which is a VP4-VP2 precursor, VP1-2A precursor, 3ABC precursor which is a stable and catalytically active precursor of 3A, 3B and 3C proteins, 3AB and 3CD precursors. The assembly signal 2A is removed from VP1-2A by a host protease, possibly host Cathepsin L. This cleavage occurs over a region of 3 amino-acids probably generating VP1 proteins with heterogeneous C-termini. During virion maturation, immature virions are rendered infectious following cleavage of VP0 into VP4 and VP2. This maturation seems to be an autocatalytic event triggered by the presence of RNA in the capsid and is followed by a conformational change of the particle. Post-translationally, the assembly signal 2A is removed from VP1-2A by a host protease, possibly host Cathepsin L in naked virions. This cleavage does not occur in enveloped virions. This cleavage occurs over a region of 3 amino-acids probably generating VP1 proteins with heterogeneous C-termini. In terms of processing, VPg is uridylylated prior to priming replication into VPg-pUpU. Unlike other picornaviruses, does not seem to be myristoylated.

The protein resides in the virion. The protein localises to the host endosome. It localises to the host multivesicular body. It is found in the host membrane. Its subcellular location is the host mitochondrion outer membrane. The protein resides in the host cytoplasm. The protein localises to the host cytoplasmic vesicle membrane. It carries out the reaction RNA(n) + a ribonucleoside 5'-triphosphate = RNA(n+1) + diphosphate. The enzyme catalyses a ribonucleoside 5'-triphosphate + H2O = a ribonucleoside 5'-diphosphate + phosphate + H(+). The catalysed reaction is Selective cleavage of Gln-|-Gly bond in the poliovirus polyprotein. In other picornavirus reactions Glu may be substituted for Gln, and Ser or Thr for Gly.. Capsid proteins VP1, VP2, and VP3 form a closed capsid enclosing the viral positive strand RNA genome. All these proteins contain a beta-sheet structure called beta-barrel jelly roll. Together they form an icosahedral capsid (T=3) composed of 60 copies of each VP1, VP2, and VP3, with a diameter of approximately 300 Angstroms. VP1 is situated at the 12 fivefold axes, whereas VP2 and VP3 are located at the quasi-sixfold axes. The naked capsid interacts with the host receptor HAVCR1 to provide virion attachment to and probably entry into the target cell. In terms of biological role, VP0 precursor is a component of the immature procapsids. Functionally, plays a role in the assembly of the 12 pentamers into an icosahedral structure. Has not been detected in mature virions, supposedly owing to its small size. Its function is as follows. Precursor component of immature procapsids that corresponds to an extended form of the structural protein VP1. After maturation, possibly by the host Cathepsin L, the assembly signal 2A is cleaved to give rise to the mature VP1 protein. Functions as a viroporin. Affects membrane integrity and causes an increase in membrane permeability. Involved in host intracellular membrane rearrangements probably to give rise to the viral factories. Does not disrupt calcium homeostasis or glycoprotein trafficking. Antagonizes the innate immune response of the host by suppressing IFN-beta synthesis, which it achieves by interfering with the RIG-I/IFIH1 pathway. In terms of biological role, affects membrane integrity and causes an increase in membrane permeability. Functionally, associates with and induces structural rearrangements of intracellular membranes. Displays RNA-binding activity. Its function is as follows. The precursor 3ABC is targeted to the mitochondrial membrane where protease 3C activity cleaves and inhibits the host antiviral protein MAVS, thereby disrupting activation of IRF3 through the IFIH1/MDA5 pathway. In vivo, the protease activity of 3ABC precursor is more efficient in cleaving the 2BC precursor than that of protein 3C. The 3ABC precursor may therefore play a role in the proteolytic processing of the polyprotein. Possible viroporin. Interacts with the 3CD precursor and with RNA structures found at both the 5'- and 3'-termini of the viral genome. Since the 3AB precursor contains the hydrophobic domain 3A, it probably anchors the whole viral replicase complex to intracellular membranes on which viral RNA synthesis occurs. In terms of biological role, may serve as membrane anchor to the 3AB and 3ABC precursors via its hydrophobic domain. May interact with RNA. Functionally, acts as a primer for viral RNA replication and remains covalently bound to viral genomic RNA. VPg is uridylylated prior to priming replication into VPg-pUpU. The VPg-pUpU is then used as primer on the genomic RNA poly(A) by the RNA-dependent RNA polymerase to replicate the viral genome. Its function is as follows. Cysteine protease that generates mature viral proteins from the precursor polyprotein. In addition to its proteolytic activity, it binds to viral RNA, and thus influences viral genome replication. RNA and substrate bind cooperatively to the protease. Cleaves IKBKG/NEMO to impair innate immune signaling. Cleaves host PABPC1 which may participate in the switch of viral translation to RNA synthesis. Interacts with the 3AB precursor and with RNA structures found at both the 5'- and 3'-termini of the viral genome. Disrupts TLR3 signaling by degrading the host adapter protein TICAM1/TRIF. In terms of biological role, RNA-directed RNA polymerase 3D-POL replicates genomic and antigenomic RNA by recognizing replications specific signals. This Cercopithecus hamlyni (Owl-faced monkey) protein is Genome polyprotein.